The primary structure comprises 238 residues: Xyloglucan-specific endo-beta-1,4-glucanase A (238 aa).

A signal peptide spans 1 to 14 (MKLSLLSLATLASA).

It belongs to the glycosyl hydrolase 12 (cellulase H) family.

It is found in the secreted. It catalyses the reaction xyloglucan + H2O = xyloglucan oligosaccharides.. Catalyzes endohydrolysis of 1,4-beta-D-glucosidic linkages in xyloglucan with retention of the beta-configuration of the glycosyl residues. Specific for xyloglucan and does not hydrolyze other cell wall components. This chain is Xyloglucan-specific endo-beta-1,4-glucanase A (xgeA), found in Aspergillus aculeatus.